We begin with the raw amino-acid sequence, 213 residues long: mRNA-decapping protein OPG121 (213 aa).

Glutamate 16 and arginine 50 together coordinate N(7)-methyl-GTP. Positions 30-209 (KDTHVFAACI…EYLSYIYNIL (180 aa)) constitute a Nudix hydrolase domain. The Nudix box motif lies at 111-132 (GKLDKKESIKDCLRRELKEESD). Positions 126 and 130 each coordinate Mg(2+). Residue aspartate 151 participates in N(7)-methyl-GTP binding. Glutamate 183 is a binding site for Mg(2+).

This sequence belongs to the Nudix hydrolase family. In terms of assembly, interacts with the late transcription elongation factor VLTF-4/OPG110. Interacts with the late transcription factors VLTF-1. The cofactor is Mg(2+). Mn(2+) serves as cofactor.

The enzyme catalyses a 5'-end (N(7)-methyl 5'-triphosphoguanosine)-guanosine in mRNA + H2O = a 5'-end phospho-guanosine in mRNA + N(7)-methyl-GDP + 2 H(+). In terms of biological role, acts with RNA polymerase to initiate transcription from late gene promoters. The polypeptide is mRNA-decapping protein OPG121 (OPG121) (Cynomys gunnisoni (Gunnison's prairie dog)).